Reading from the N-terminus, the 49-residue chain is MASFDAAERRNLDRHICMRCNARNSPDADRCRKCGYTNLRPKAKERRAA.

Belongs to the eukaryotic ribosomal protein eL40 family.

This is Large ribosomal subunit protein eL40 from Halorubrum lacusprofundi (strain ATCC 49239 / DSM 5036 / JCM 8891 / ACAM 34).